A 168-amino-acid polypeptide reads, in one-letter code: GTP-dependent dephospho-CoA kinase (168 aa).

The GTP site is built by Asp-49, Ile-50, Val-51, Asp-68, Lys-70, and Glu-120.

Belongs to the GTP-dependent DPCK family.

The enzyme catalyses 3'-dephospho-CoA + GTP = GDP + CoA + H(+). Its pathway is cofactor biosynthesis; coenzyme A biosynthesis. In terms of biological role, catalyzes the GTP-dependent phosphorylation of the 3'-hydroxyl group of dephosphocoenzyme A to form coenzyme A (CoA). The sequence is that of GTP-dependent dephospho-CoA kinase from Pyrobaculum islandicum (strain DSM 4184 / JCM 9189 / GEO3).